Here is a 186-residue protein sequence, read N- to C-terminus: Peptidyl-tRNA hydrolase (186 aa).

Tyr14 provides a ligand contact to tRNA. The active-site Proton acceptor is the His19. Positions 61, 63, and 107 each coordinate tRNA.

This sequence belongs to the PTH family. In terms of assembly, monomer.

It is found in the cytoplasm. It catalyses the reaction an N-acyl-L-alpha-aminoacyl-tRNA + H2O = an N-acyl-L-amino acid + a tRNA + H(+). Functionally, hydrolyzes ribosome-free peptidyl-tRNAs (with 1 or more amino acids incorporated), which drop off the ribosome during protein synthesis, or as a result of ribosome stalling. In terms of biological role, catalyzes the release of premature peptidyl moieties from peptidyl-tRNA molecules trapped in stalled 50S ribosomal subunits, and thus maintains levels of free tRNAs and 50S ribosomes. The chain is Peptidyl-tRNA hydrolase from Helicobacter acinonychis (strain Sheeba).